We begin with the raw amino-acid sequence, 600 residues long: MSKDEHKLPLSKRKESIIFMMILFAFQVFMVVLFSVWVRYSKNEVNYSTLTPEQLQELEATGGVVQEEVTNIYGYFRDINIMIFFGFGFLMTFLRRYGYSALGYTFIISALVAQWSVLIYGFFETVDHKNDHGGDYASTFEMSQTVLLQGLFCAGAVMISYGAVLGRVTPLQMLVVGIFEPIFYFLNMFIGEMNLEAIDVGGGMYIHLFGSVFGLTIAWFLTDKKSKDCEDNSPSYTGDYFAMAGTLFLWMMWPSFNAAIAPLGEPQFRAIANTFLSLTASTIATFIVTRLFGHLGHKIDMVHVQNSSLAGGVVQGCLAHMNINPGGAIGMGFLAGVISVIGYLFISPFLQRRFNIQDTCGIHNLHFMPGFIGSIAACIAAWKGLNDRSLYNPIEFNQIFRAGEDQARNNAAATFISIGIAIAGGLFVGMILKALKKVGGLKAKQYYQDSAFWHVPIDYPKDVEYVVEQNNLPMPTTDNGDNVVGGGVEMKKHNNNNNKKENGYRRDLIRLLETLVRNEQSTDSSYSDSDSSDEEEKERRIRKLAKKSYRRSKKSHSEHQPQHQPEESTFNNNNNNNNNNATAETTDNGGSSTNSPTSKV.

Residues 1 to 16 are Cytoplasmic-facing; it reads MSKDEHKLPLSKRKES. Residues 17–37 form a helical membrane-spanning segment; that stretch reads IIFMMILFAFQVFMVVLFSVW. The Extracellular segment spans residues 38–73; that stretch reads VRYSKNEVNYSTLTPEQLQELEATGGVVQEEVTNIY. Asn-46 is a glycosylation site (N-linked (GlcNAc...) asparagine). Residues 74–94 traverse the membrane as a helical segment; sequence GYFRDINIMIFFGFGFLMTFL. Residues 95-102 are Cytoplasmic-facing; sequence RRYGYSAL. A helical membrane pass occupies residues 103–123; the sequence is GYTFIISALVAQWSVLIYGFF. Topologically, residues 124 to 145 are extracellular; sequence ETVDHKNDHGGDYASTFEMSQT. Residues 146-166 form a helical membrane-spanning segment; the sequence is VLLQGLFCAGAVMISYGAVLG. The Cytoplasmic segment spans residues 167–170; that stretch reads RVTP. The helical transmembrane segment at 171–191 threads the bilayer; sequence LQMLVVGIFEPIFYFLNMFIG. Topologically, residues 192–199 are extracellular; that stretch reads EMNLEAID. Residues 200 to 220 form a helical membrane-spanning segment; the sequence is VGGGMYIHLFGSVFGLTIAWF. Residues 221–240 lie on the Cytoplasmic side of the membrane; the sequence is LTDKKSKDCEDNSPSYTGDY. The chain crosses the membrane as a helical span at residues 241-261; that stretch reads FAMAGTLFLWMMWPSFNAAIA. The Extracellular segment spans residues 262–274; the sequence is PLGEPQFRAIANT. A helical transmembrane segment spans residues 275–295; the sequence is FLSLTASTIATFIVTRLFGHL. At 296 to 303 the chain is on the cytoplasmic side; the sequence is GHKIDMVH. Residues 304 to 323 form a helical membrane-spanning segment; that stretch reads VQNSSLAGGVVQGCLAHMNI. The Extracellular portion of the chain corresponds to 324–325; sequence NP. Residues 326–346 form a helical membrane-spanning segment; that stretch reads GGAIGMGFLAGVISVIGYLFI. Over 347 to 361 the chain is Cytoplasmic; it reads SPFLQRRFNIQDTCG. The helical transmembrane segment at 362 to 382 threads the bilayer; it reads IHNLHFMPGFIGSIAACIAAW. Topologically, residues 383–411 are extracellular; it reads KGLNDRSLYNPIEFNQIFRAGEDQARNNA. The chain crosses the membrane as a helical span at residues 412 to 432; it reads AATFISIGIAIAGGLFVGMIL. Residues 433–600 lie on the Cytoplasmic side of the membrane; that stretch reads KALKKVGGLK…SSTNSPTSKV (168 aa). Positions 471–600 are disordered; the sequence is NLPMPTTDNG…SSTNSPTSKV (130 aa). A compositionally biased stretch (basic and acidic residues) spans 498–510; the sequence is NKKENGYRRDLIR. The span at 519-529 shows a compositional bias: low complexity; it reads EQSTDSSYSDS. Basic residues predominate over residues 540–554; it reads RIRKLAKKSYRRSKK. The span at 555–566 shows a compositional bias: basic and acidic residues; sequence SHSEHQPQHQPE. Low complexity predominate over residues 571–580; it reads NNNNNNNNNN. Residues 581-600 show a composition bias toward polar residues; it reads ATAETTDNGGSSTNSPTSKV.

Belongs to the ammonium transporter (TC 2.A.49) family. Rh subfamily.

It is found in the membrane. Its function is as follows. May be a carbon dioxide/bicarbonate transporter. The polypeptide is Rhesus-like glycoprotein B (rhgB) (Dictyostelium discoideum (Social amoeba)).